Reading from the N-terminus, the 453-residue chain is Oocyte zinc finger protein XlCOF6 (453 aa).

14 consecutive C2H2-type zinc fingers follow at residues 6–29 (FICSKCGETFTVNSHLLTHLCGKH), 67–89 (FTCTECGKSFSERDNLKCHHKTH), 95–117 (FTCMECGKGFSVKSSLKHHYKAH), 123–145 (VRCTECGKEFTSKYYLNVHKRLH), 151–173 (FTCTQCGKCFSDKSALKYHHKTH), 179–201 (FACTECGKSFTEKSILQKHQRTH), 207–229 (FTCTECGKSYSAMSTLECHRRTH), 235–257 (FTCTECGKSFTEKSILRKHHKTH), 263–285 (FTCTECGKSCTEKSILRKHQITH), 291–313 (FTCTECGKCFSDKTALKYHHKTH), 319–341 (FACTECGKSFTDKSILRNHQRTH), 375–397 (FTCTECGKSFTEKSILRKHHKTH), 403–425 (FTCTECGKSFTHKSILQKHQRTH), and 431–453 (FTCTECGKCFSDKTAIKYHRITH).

It belongs to the krueppel C2H2-type zinc-finger protein family.

Its subcellular location is the nucleus. Functionally, may be involved in transcriptional regulation. The polypeptide is Oocyte zinc finger protein XlCOF6 (Xenopus laevis (African clawed frog)).